A 478-amino-acid polypeptide reads, in one-letter code: Cobyric acid synthase (478 aa).

The region spanning 250–437 (QLRVVVPVLP…VHGVFDHPMH (188 aa)) is the GATase cobBQ-type domain. The Nucleophile role is filled by Cys331. The active site involves His429.

The protein belongs to the CobB/CobQ family. CobQ subfamily.

Its pathway is cofactor biosynthesis; adenosylcobalamin biosynthesis. Catalyzes amidations at positions B, D, E, and G on adenosylcobyrinic A,C-diamide. NH(2) groups are provided by glutamine, and one molecule of ATP is hydrogenolyzed for each amidation. This chain is Cobyric acid synthase, found in Xanthomonas euvesicatoria pv. vesicatoria (strain 85-10) (Xanthomonas campestris pv. vesicatoria).